The sequence spans 98 residues: Essential MCU regulator, mitochondrial (98 aa).

Residues isoleucine 52–alanine 72 traverse the membrane as a helical segment.

Belongs to the SMDT1/EMRE family.

The protein resides in the mitochondrion inner membrane. In terms of biological role, essential regulatory subunit of the mitochondrial calcium uniporter (mcu) channel, a protein that mediates calcium uptake into mitochondria. In Anopheles gambiae (African malaria mosquito), this protein is Essential MCU regulator, mitochondrial.